The following is a 648-amino-acid chain: Threonine--tRNA ligase (648 aa).

The TGS domain occupies 1-61; that stretch reads MINITFPDGA…DTDGSIEIVT (61 aa). Residues 242 to 540 form a catalytic region; the sequence is DHRKLGKELD…LIETYKGAFP (299 aa). The Zn(2+) site is built by cysteine 336, histidine 387, and histidine 517.

Belongs to the class-II aminoacyl-tRNA synthetase family. In terms of assembly, homodimer. The cofactor is Zn(2+).

Its subcellular location is the cytoplasm. The catalysed reaction is tRNA(Thr) + L-threonine + ATP = L-threonyl-tRNA(Thr) + AMP + diphosphate + H(+). In terms of biological role, catalyzes the attachment of threonine to tRNA(Thr) in a two-step reaction: L-threonine is first activated by ATP to form Thr-AMP and then transferred to the acceptor end of tRNA(Thr). Also edits incorrectly charged L-seryl-tRNA(Thr). The chain is Threonine--tRNA ligase from Streptococcus uberis (strain ATCC BAA-854 / 0140J).